Here is a 187-residue protein sequence, read N- to C-terminus: Small ribosomal subunit protein uS5 (187 aa).

The interval methionine 1–proline 20 is disordered. In terms of domain architecture, S5 DRBM spans phenylalanine 22 to valine 85. The segment at aspartate 154 to alanine 174 is disordered.

It belongs to the universal ribosomal protein uS5 family. Part of the 30S ribosomal subunit. Contacts proteins S4 and S8.

In terms of biological role, with S4 and S12 plays an important role in translational accuracy. Located at the back of the 30S subunit body where it stabilizes the conformation of the head with respect to the body. This chain is Small ribosomal subunit protein uS5, found in Cereibacter sphaeroides (strain ATCC 17025 / ATH 2.4.3) (Rhodobacter sphaeroides).